The chain runs to 665 residues: Glycine--tRNA ligase beta subunit (665 aa).

Belongs to the class-II aminoacyl-tRNA synthetase family. Tetramer of two alpha and two beta subunits.

It is found in the cytoplasm. The enzyme catalyses tRNA(Gly) + glycine + ATP = glycyl-tRNA(Gly) + AMP + diphosphate. The sequence is that of Glycine--tRNA ligase beta subunit (glyS) from Rickettsia prowazekii (strain Madrid E).